The sequence spans 401 residues: Imidazolonepropionase (401 aa).

Residues His66 and His68 each coordinate Fe(3+). Positions 66 and 68 each coordinate Zn(2+). 4-imidazolone-5-propanoate is bound by residues Arg75, Tyr138, and His171. Tyr138 contributes to the N-formimidoyl-L-glutamate binding site. His236 provides a ligand contact to Fe(3+). His236 is a binding site for Zn(2+). Gln239 serves as a coordination point for 4-imidazolone-5-propanoate. Asp311 provides a ligand contact to Fe(3+). Asp311 lines the Zn(2+) pocket. Residues Asn313 and Gly315 each contribute to the N-formimidoyl-L-glutamate site. Thr316 lines the 4-imidazolone-5-propanoate pocket.

Belongs to the metallo-dependent hydrolases superfamily. HutI family. Requires Zn(2+) as cofactor. Fe(3+) is required as a cofactor.

The protein localises to the cytoplasm. The catalysed reaction is 4-imidazolone-5-propanoate + H2O = N-formimidoyl-L-glutamate. It functions in the pathway amino-acid degradation; L-histidine degradation into L-glutamate; N-formimidoyl-L-glutamate from L-histidine: step 3/3. Functionally, catalyzes the hydrolytic cleavage of the carbon-nitrogen bond in imidazolone-5-propanoate to yield N-formimidoyl-L-glutamate. It is the third step in the universal histidine degradation pathway. The protein is Imidazolonepropionase of Acinetobacter baumannii (strain AB307-0294).